Consider the following 323-residue polypeptide: Beta-ketoacyl-[acyl-carrier-protein] synthase III (323 aa).

Active-site residues include Cys-114 and His-250. Residues 251–255 are ACP-binding; that stretch reads QANIR. Asn-280 is a catalytic residue.

Belongs to the thiolase-like superfamily. FabH family. Homodimer.

The protein localises to the cytoplasm. The enzyme catalyses malonyl-[ACP] + acetyl-CoA + H(+) = 3-oxobutanoyl-[ACP] + CO2 + CoA. It functions in the pathway lipid metabolism; fatty acid biosynthesis. Catalyzes the condensation reaction of fatty acid synthesis by the addition to an acyl acceptor of two carbons from malonyl-ACP. Catalyzes the first condensation reaction which initiates fatty acid synthesis and may therefore play a role in governing the total rate of fatty acid production. Possesses both acetoacetyl-ACP synthase and acetyl transacylase activities. Its substrate specificity determines the biosynthesis of branched-chain and/or straight-chain of fatty acids. In Ruegeria sp. (strain TM1040) (Silicibacter sp.), this protein is Beta-ketoacyl-[acyl-carrier-protein] synthase III.